The sequence spans 224 residues: Ribose-5-phosphate isomerase A (224 aa).

Residues 33–36, 86–89, and 99–102 contribute to the substrate site; these read TGST, DGAD, and KGGG. The active-site Proton acceptor is E108. Position 126 (K126) interacts with substrate.

The protein belongs to the ribose 5-phosphate isomerase family. In terms of assembly, homodimer.

It carries out the reaction aldehydo-D-ribose 5-phosphate = D-ribulose 5-phosphate. The protein operates within carbohydrate degradation; pentose phosphate pathway; D-ribose 5-phosphate from D-ribulose 5-phosphate (non-oxidative stage): step 1/1. Catalyzes the reversible conversion of ribose-5-phosphate to ribulose 5-phosphate. This chain is Ribose-5-phosphate isomerase A, found in Bordetella avium (strain 197N).